The sequence spans 273 residues: MSSPRHVFYISDRTGLTAENIGEALLNQFGNLSFKRHTHPFVDTPEKARAVVEKVNRSRQENGQRPIAFVSVVDDEIRRIIKGADAFQINFFETFLGLLEKELNTEATASGQGHHSIGNTKRYDARMEAVNFSLNHDDGVSDKNLQEADVILMGVSRSGKTPTCLYLALQYGIRAANYPLIPDDLESADLPRMVKPYRDKLFGLTIQPERLQAIRQERRPNSTYAKIDTCRSEVADAQSMFRRHGIPFANTTDKSVEELAVHILQACKLKRRF.

Residue 154–161 (GVSRSGKT) participates in ADP binding.

Belongs to the pyruvate, phosphate/water dikinase regulatory protein family. PSRP subfamily.

The enzyme catalyses [pyruvate, water dikinase] + ADP = [pyruvate, water dikinase]-phosphate + AMP + H(+). It carries out the reaction [pyruvate, water dikinase]-phosphate + phosphate + H(+) = [pyruvate, water dikinase] + diphosphate. Bifunctional serine/threonine kinase and phosphorylase involved in the regulation of the phosphoenolpyruvate synthase (PEPS) by catalyzing its phosphorylation/dephosphorylation. The chain is Putative phosphoenolpyruvate synthase regulatory protein from Neisseria meningitidis serogroup B (strain ATCC BAA-335 / MC58).